The sequence spans 485 residues: Adenosylhomocysteinase (485 aa).

Substrate is bound by residues Thr64, Asp139, and Glu205. NAD(+) is bound at residue 206–208 (TTT). Substrate is bound by residues Lys235 and Asp239. NAD(+)-binding positions include Asn240, 269–274 (GYGDVG), Glu292, Asn327, 348–350 (IGH), and Asn397.

Belongs to the adenosylhomocysteinase family. It depends on NAD(+) as a cofactor.

It carries out the reaction S-adenosyl-L-homocysteine + H2O = L-homocysteine + adenosine. The protein operates within amino-acid biosynthesis; L-homocysteine biosynthesis; L-homocysteine from S-adenosyl-L-homocysteine: step 1/1. Adenosylhomocysteine is a competitive inhibitor of S-adenosyl-L-methionine-dependent methyl transferase reactions; therefore adenosylhomocysteinase may play a key role in the control of methylations via regulation of the intracellular concentration of adenosylhomocysteine. The polypeptide is Adenosylhomocysteinase (SAHH) (Phalaenopsis sp. (Moth orchid)).